The sequence spans 662 residues: Protein transport Sec1b (662 aa).

It belongs to the STXBP/unc-18/SEC1 family.

Involved in the vesicle trafficking. Binds syntaxins. The chain is Protein transport Sec1b (SEC1B) from Arabidopsis thaliana (Mouse-ear cress).